Here is a 311-residue protein sequence, read N- to C-terminus: Aspartate carbamoyltransferase catalytic subunit (311 aa).

2 residues coordinate carbamoyl phosphate: arginine 55 and threonine 56. Lysine 85 is an L-aspartate binding site. The carbamoyl phosphate site is built by arginine 106, histidine 135, and glutamine 138. Residues arginine 168 and arginine 230 each coordinate L-aspartate. Carbamoyl phosphate is bound by residues leucine 268 and proline 269.

The protein belongs to the aspartate/ornithine carbamoyltransferase superfamily. ATCase family. As to quaternary structure, heterododecamer (2C3:3R2) of six catalytic PyrB chains organized as two trimers (C3), and six regulatory PyrI chains organized as three dimers (R2).

It carries out the reaction carbamoyl phosphate + L-aspartate = N-carbamoyl-L-aspartate + phosphate + H(+). It functions in the pathway pyrimidine metabolism; UMP biosynthesis via de novo pathway; (S)-dihydroorotate from bicarbonate: step 2/3. Catalyzes the condensation of carbamoyl phosphate and aspartate to form carbamoyl aspartate and inorganic phosphate, the committed step in the de novo pyrimidine nucleotide biosynthesis pathway. The sequence is that of Aspartate carbamoyltransferase catalytic subunit from Escherichia fergusonii (strain ATCC 35469 / DSM 13698 / CCUG 18766 / IAM 14443 / JCM 21226 / LMG 7866 / NBRC 102419 / NCTC 12128 / CDC 0568-73).